Consider the following 469-residue polypeptide: Tubulin gamma-2 chain (469 aa).

142–148 (AGGTGSG) is a GTP binding site.

The protein belongs to the tubulin family.

It localises to the cytoplasm. Its subcellular location is the cytoskeleton. The protein resides in the microtubule organizing center. Its function is as follows. Tubulin is the major constituent of microtubules. The gamma chain is found at microtubule organizing centers (MTOC) such as the spindle poles, suggesting that it is involved in the minus-end nucleation of microtubule assembly. The sequence is that of Tubulin gamma-2 chain (TUBG2) from Zea mays (Maize).